Consider the following 325-residue polypeptide: Beta-ketoacyl-[acyl-carrier-protein] synthase III (325 aa).

Active-site residues include cysteine 116 and histidine 252. The segment at 253–257 (QANLR) is ACP-binding. Residue asparagine 282 is part of the active site.

The protein belongs to the thiolase-like superfamily. FabH family. As to quaternary structure, homodimer.

The protein localises to the cytoplasm. The enzyme catalyses malonyl-[ACP] + acetyl-CoA + H(+) = 3-oxobutanoyl-[ACP] + CO2 + CoA. It participates in lipid metabolism; fatty acid biosynthesis. Functionally, catalyzes the condensation reaction of fatty acid synthesis by the addition to an acyl acceptor of two carbons from malonyl-ACP. Catalyzes the first condensation reaction which initiates fatty acid synthesis and may therefore play a role in governing the total rate of fatty acid production. Possesses both acetoacetyl-ACP synthase and acetyl transacylase activities. Its substrate specificity determines the biosynthesis of branched-chain and/or straight-chain of fatty acids. The protein is Beta-ketoacyl-[acyl-carrier-protein] synthase III of Xanthomonas campestris pv. campestris (strain ATCC 33913 / DSM 3586 / NCPPB 528 / LMG 568 / P 25).